We begin with the raw amino-acid sequence, 783 residues long: Rho GTPase-activating protein gacR (783 aa).

Residues 138-188 (AKNRFDKARLSFDEASEQFKQLRKKQNNINNEKLLEAEEDLDYATQQFSDI) are a coiled coil. The segment at 262-299 (QFEQTNSSRTISLPPPPPPKPTSSTPSSSPSPSPSSSI) is disordered. Residues 283–299 (TSSTPSSSPSPSPSSSI) show a composition bias toward low complexity. In terms of domain architecture, Rho-GAP spans 319–509 (MALSTITERE…FIISNFNNIF (191 aa)). A compositionally biased stretch (gly residues) spans 527-539 (GSSGGGGGGGSSG). The disordered stretch occupies residues 527-745 (GSSGGGGGGG…TTNSRPLSNS (219 aa)). Low complexity-rich tracts occupy residues 568 to 589 (SVNT…ASSA), 599 to 630 (PSSS…NINP), 641 to 651 (PKKISSSSNSL), and 661 to 698 (SIPE…RSST). The span at 706-738 (NRVSMYLQNSNTGVPLPSQKPQRVISNNNTTTN) shows a compositional bias: polar residues.

The protein localises to the cytoplasm. Its function is as follows. Rho GTPase-activating protein involved in the signal transduction pathway. In Dictyostelium discoideum (Social amoeba), this protein is Rho GTPase-activating protein gacR (gacR).